The sequence spans 521 residues: Bifunctional purine biosynthesis protein PurH (521 aa).

Residues 1 to 145 (MIKQALISVS…KNHRDVTVVV (145 aa)) form the MGS-like domain.

The protein belongs to the PurH family.

It catalyses the reaction (6R)-10-formyltetrahydrofolate + 5-amino-1-(5-phospho-beta-D-ribosyl)imidazole-4-carboxamide = 5-formamido-1-(5-phospho-D-ribosyl)imidazole-4-carboxamide + (6S)-5,6,7,8-tetrahydrofolate. The enzyme catalyses IMP + H2O = 5-formamido-1-(5-phospho-D-ribosyl)imidazole-4-carboxamide. The protein operates within purine metabolism; IMP biosynthesis via de novo pathway; 5-formamido-1-(5-phospho-D-ribosyl)imidazole-4-carboxamide from 5-amino-1-(5-phospho-D-ribosyl)imidazole-4-carboxamide (10-formyl THF route): step 1/1. It functions in the pathway purine metabolism; IMP biosynthesis via de novo pathway; IMP from 5-formamido-1-(5-phospho-D-ribosyl)imidazole-4-carboxamide: step 1/1. The polypeptide is Bifunctional purine biosynthesis protein PurH (Burkholderia cenocepacia (strain ATCC BAA-245 / DSM 16553 / LMG 16656 / NCTC 13227 / J2315 / CF5610) (Burkholderia cepacia (strain J2315))).